The chain runs to 1322 residues: Ice nucleation protein InaA (1322 aa).

The segment at 162-1281 (ATYGSTLSGT…LTAGENSVLI (1120 aa)) is octapeptide periodicity. 4 stretches are compositionally biased toward polar residues: residues 271–302 (SLTA…QKGS), 327–350 (TQTA…QKGS), 373–398 (GSTQ…QKGS), and 423–446 (TQTA…QKGS). Disordered regions lie at residues 271–303 (SLTA…KGSD), 327–358 (TQTA…GYGS), 372–399 (YGST…KGSD), and 423–448 (TQTA…GSDL).

Belongs to the bacterial ice nucleation protein family.

It localises to the cell outer membrane. In terms of biological role, ice nucleation proteins enable bacteria to nucleate crystallization in supercooled water. This is Ice nucleation protein InaA (inaA) from Pantoea ananas (Erwinia uredovora).